We begin with the raw amino-acid sequence, 213 residues long: Large ribosomal subunit protein uL3 (213 aa).

Belongs to the universal ribosomal protein uL3 family. As to quaternary structure, part of the 50S ribosomal subunit. Forms a cluster with proteins L14 and L19.

One of the primary rRNA binding proteins, it binds directly near the 3'-end of the 23S rRNA, where it nucleates assembly of the 50S subunit. This Bifidobacterium longum subsp. infantis (strain ATCC 15697 / DSM 20088 / JCM 1222 / NCTC 11817 / S12) protein is Large ribosomal subunit protein uL3.